The following is a 257-amino-acid chain: Gamma-secretase subunit APH-1B (257 aa).

Transmembrane regions (helical) follow at residues 5–25, 32–52, 66–86, 115–135, 160–180, 186–206, and 213–233; these read VFFG…VFTI, VIFL…SSVF, PVQN…QELF, LLAY…SFVN, AFMT…FFDG, WYTL…TFLS, and LVTA…VAGG.

Belongs to the APH-1 family. Probable component of the gamma-secretase complex, a complex composed of a presenilin homodimer (PSEN1 or PSEN2), nicastrin (NCSTN), APH1 (APH1A or APH1B) and PEN2. Such minimal complex is sufficient for secretase activity, although other components may exist. Interacts with PSEN1 and PSEN2.

Its subcellular location is the membrane. Its function is as follows. Probable subunit of the gamma-secretase complex, an endoprotease complex that catalyzes the intramembrane cleavage of integral proteins such as Notch receptors and APP (amyloid-beta precursor protein). It probably represents a stabilizing cofactor for the presenilin homodimer that promotes the formation of a stable complex. Probably present in a minority of gamma-secretase complexes compared to APH1A. The sequence is that of Gamma-secretase subunit APH-1B (Aph1b) from Mus musculus (Mouse).